A 151-amino-acid chain; its full sequence is FAD synthase (151 aa).

Residues 9 to 10, 14 to 17, D96, and Y123 each bind ATP; these read TF and HPGH.

Belongs to the archaeal FAD synthase family. Homodimer. It depends on a divalent metal cation as a cofactor.

The catalysed reaction is FMN + ATP + H(+) = FAD + diphosphate. Its pathway is cofactor biosynthesis; FAD biosynthesis; FAD from FMN: step 1/1. In terms of biological role, catalyzes the transfer of the AMP portion of ATP to flavin mononucleotide (FMN) to produce flavin adenine dinucleotide (FAD) coenzyme. This Methanothermobacter thermautotrophicus (strain ATCC 29096 / DSM 1053 / JCM 10044 / NBRC 100330 / Delta H) (Methanobacterium thermoautotrophicum) protein is FAD synthase.